A 211-amino-acid chain; its full sequence is MAKVRVRQHVNPLSHKYRHPIAPPDWNQVYQDMTQPLHLDIGCARGKFLLQMAQVEPEINFLGIEIRQPLVIEANQERERLGLSNLAFVFGNMNVAPEILLQSLPADKLFWVSIQFPDPWFKQRHSKRRVVQPELVIALAKYMVAGGWVFLQSDVESIALEMTERFQAHPHFVRQHQTPWLEENIFPVPTEREKSTYNKGQPVYRSLFRVR.

Residues Asp-40, Glu-65, Asn-92, and Asp-118 each coordinate S-adenosyl-L-methionine. Asp-118 is an active-site residue. Residues Lys-122 and Asp-154 each coordinate substrate.

It belongs to the class I-like SAM-binding methyltransferase superfamily. TrmB family.

The catalysed reaction is guanosine(46) in tRNA + S-adenosyl-L-methionine = N(7)-methylguanosine(46) in tRNA + S-adenosyl-L-homocysteine. It participates in tRNA modification; N(7)-methylguanine-tRNA biosynthesis. Its function is as follows. Catalyzes the formation of N(7)-methylguanine at position 46 (m7G46) in tRNA. In Microcystis aeruginosa (strain NIES-843 / IAM M-2473), this protein is tRNA (guanine-N(7)-)-methyltransferase.